Consider the following 453-residue polypeptide: tRNA modification GTPase MnmE (453 aa).

(6S)-5-formyl-5,6,7,8-tetrahydrofolate contacts are provided by Arg-28, Glu-90, and Arg-129. A TrmE-type G domain is found at 224 to 375; that stretch reads GLRVAIIGRP…LSSALLKLCG (152 aa). Residue Asn-234 coordinates K(+). GTP-binding positions include 234–239, 253–259, 278–281, and 356–358; these read NVGKSS, TDLPGTT, DTAG, and SAR. Mg(2+) is bound at residue Ser-238. K(+) is bound by residues Thr-253, Leu-255, and Thr-258. Thr-259 serves as a coordination point for Mg(2+). Lys-453 contributes to the (6S)-5-formyl-5,6,7,8-tetrahydrofolate binding site.

It belongs to the TRAFAC class TrmE-Era-EngA-EngB-Septin-like GTPase superfamily. TrmE GTPase family. As to quaternary structure, homodimer. Heterotetramer of two MnmE and two MnmG subunits. K(+) serves as cofactor.

The protein localises to the cytoplasm. In terms of biological role, exhibits a very high intrinsic GTPase hydrolysis rate. Involved in the addition of a carboxymethylaminomethyl (cmnm) group at the wobble position (U34) of certain tRNAs, forming tRNA-cmnm(5)s(2)U34. In Synechococcus sp. (strain RCC307), this protein is tRNA modification GTPase MnmE.